The following is a 100-amino-acid chain: Ferredoxin (100 aa).

The propeptide occupies 1-8 (MLSQVCRF). The 2Fe-2S ferredoxin-type domain occupies 9–100 (GTITAVKGGV…GENDGAVFEL (92 aa)). The [2Fe-2S] cluster site is built by Cys46, Cys52, Cys55, and Cys85.

It depends on [2Fe-2S] cluster as a cofactor.

It localises to the hydrogenosome. Ferredoxins are iron-sulfur proteins that transfer electrons in a wide variety of metabolic reactions. It links pyruvate:ferredoxin oxidoreductase to hydrogenase. In Trichomonas vaginalis, this protein is Ferredoxin.